Here is a 531-residue protein sequence, read N- to C-terminus: MPSDKDIKSPAQPKKEEEIPKSILTRISSPPPILNQPDANIIHHPQPQVPQSSLNIPGIKLSPQISTSLENREIVMAGGAYLKERMESPDSLNHKPTLLQPDKSESIPSIDYTLNPPKESQHHKSPSVHAHFYVEETLRPVRNRSRSGSNSNNNLTPITSPQHSEPSSILNKDAIKSQESLRATTNSISSAAASNQSTPRSIISGGGGGGGGANTATSSNSTTSNTALAAQGTTTTTTTTNSNSNTTTTKGEQNSNIDPRLPQDDGKFHVLIGVCGALSVGKVKLIVNKLLEIYTSDKISIQVILTKSSENFLLPETLNVLENVKKVRVWTDIDEWTTWKTRLDPVLHIELRRWADILLVCPLTANTLAKISLGICDNLLTNVIRAWNSSYPILLAPAMDSHSYSSSTTKRQLRLIADDMPWIEVLKPLEKVFGSYGDIGMGGMTDWNEIVNRIVMKLGGYPEDEDEDEADDSKDNIDESAIIDDDDDDDDDDDDDDDDDDDDDDDDDDDEEDPPQQQSTTDNSKDETTNL.

A compositionally biased stretch (basic and acidic residues) spans 1–20 (MPSDKDIKSPAQPKKEEEIP). Disordered regions lie at residues 1–42 (MPSD…ANII), 88–127 (SPDS…KSPS), 139–168 (RPVR…EPSS), 180–261 (SLRA…DPRL), and 461–531 (YPED…TTNL). Residues 155–168 (LTPITSPQHSEPSS) show a composition bias toward polar residues. Positions 183–198 (ATTNSISSAAASNQST) are enriched in low complexity. The segment covering 204–213 (SGGGGGGGGA) has biased composition (gly residues). Residues 214-249 (NTATSSNSTTSNTALAAQGTTTTTTTTNSNSNTTTT) show a composition bias toward low complexity. Acidic residues-rich tracts occupy residues 462-472 (PEDEDEDEADD) and 481-514 (AIID…EEDP).

It belongs to the HFCD (homooligomeric flavin containing Cys decarboxylase) superfamily.

The protein resides in the nucleus. The protein localises to the cytoplasm. May stimulate expression of certain genes that are periodically expressed during late G1. Also modulates the expression of the ENA1 ATPase. The chain is Protein SIS2 (SIS2) from Candida tropicalis (Yeast).